Here is a 932-residue protein sequence, read N- to C-terminus: Protocadherin gamma-A7 (932 aa).

An N-terminal signal peptide occupies residues 1–28 (MAAQPRGGDCRGFVLLSILLGTPWEAWA). 6 Cadherin domains span residues 29 to 133 (GRIL…VPRF), 134 to 242 (LTEE…TPVF), 243 to 347 (SLPQ…APEV), 348 to 452 (TMTS…PPTF), 453 to 562 (PHSS…PPEI), and 570 to 682 (DGST…EPSD). Topologically, residues 29–692 (GRILYSVSEE…GPYNYDLTLY (664 aa)) are extracellular. N-linked (GlcNAc...) asparagine glycans are attached at residues N419 and N545. A helical transmembrane segment spans residues 693–713 (LVVAVAAVSCVFLAFVLVLLA). At 714 to 932 (LRLRRWHKSR…KKKSGKKEKK (219 aa)) the chain is on the cytoplasmic side. Disordered stretches follow at residues 804 to 841 (VPSI…WPNN) and 902 to 932 (ATLT…KEKK). Polar residues predominate over residues 806-841 (SIQQAPPNTDWRFSQAQRPGTSGSQNGDDTGTWPNN). Residues 922–932 (NKKKSGKKEKK) show a composition bias toward basic residues.

The protein localises to the cell membrane. Functionally, potential calcium-dependent cell-adhesion protein. May be involved in the establishment and maintenance of specific neuronal connections in the brain. This chain is Protocadherin gamma-A7 (PCDHGA7), found in Pan troglodytes (Chimpanzee).